The sequence spans 171 residues: MAETIRIIGIDPGLRYTGWGVIDLAGNRLQFVAAGTVSSDVQCDLASRLCQIHKGLSEVVHQFMPHEAAVEHVFVNKDATATLKLGQARAIALLVPAQANCPVFEYAPNKVKKSVIGVGHGAKEQIHMMVKVLLPRAEFDSNDAADALALALCHSMHRKRIDQSYQARMAI.

Residues D11, E71, and D143 contribute to the active site. The Mg(2+) site is built by D11, E71, and D143.

This sequence belongs to the RuvC family. In terms of assembly, homodimer which binds Holliday junction (HJ) DNA. The HJ becomes 2-fold symmetrical on binding to RuvC with unstacked arms; it has a different conformation from HJ DNA in complex with RuvA. In the full resolvosome a probable DNA-RuvA(4)-RuvB(12)-RuvC(2) complex forms which resolves the HJ. Mg(2+) serves as cofactor.

The protein resides in the cytoplasm. It carries out the reaction Endonucleolytic cleavage at a junction such as a reciprocal single-stranded crossover between two homologous DNA duplexes (Holliday junction).. Its function is as follows. The RuvA-RuvB-RuvC complex processes Holliday junction (HJ) DNA during genetic recombination and DNA repair. Endonuclease that resolves HJ intermediates. Cleaves cruciform DNA by making single-stranded nicks across the HJ at symmetrical positions within the homologous arms, yielding a 5'-phosphate and a 3'-hydroxyl group; requires a central core of homology in the junction. The consensus cleavage sequence is 5'-(A/T)TT(C/G)-3'. Cleavage occurs on the 3'-side of the TT dinucleotide at the point of strand exchange. HJ branch migration catalyzed by RuvA-RuvB allows RuvC to scan DNA until it finds its consensus sequence, where it cleaves and resolves the cruciform DNA. The protein is Crossover junction endodeoxyribonuclease RuvC of Bartonella tribocorum (strain CIP 105476 / IBS 506).